Here is a 434-residue protein sequence, read N- to C-terminus: MSDTVDIYDDRGKLLESNVDIMSLAPTRNAAIQSIIMDTKRSVAVNLAGIQGALASGKMGGKGRQILGRGLNYDIVGNADAIAENVKKLVQVDEGDDTNVIKVKGGKSLLIQSPKSRIIAGADFMSATTVGAAAVTQTIMDMFGTDPYDAPIVKSAVWGSYPQTMDLMGGQVQGILSIPQNNEGLGFSLRNIMANHVAAISNRNAMNASALSSIYEQSGIFEMGGAVGMFERHQLLGLAYQGLNANNLLYDIVKENGKDGTIGTVIESVVRRAIEAGIISVDKTAPSGYNFYKANDVPKWNACAAVGTLAATLVNCGAGRAAQNVSSTLLYFNDILEKETGLPGCDYGKVEGTAVGFSFFSHSIYGGGGPGVFNGNHVVTRHSRGFAIPCVCAAVALDAGTQMFSIESTSGLIGDVFGAIPEFREPIKAVAGVL.

Tyr-365 is a binding site for coenzyme M. Gly-367 is a binding site for coenzyme B.

It belongs to the methyl-coenzyme M reductase beta subunit family. As to quaternary structure, MCR is a hexamer of two alpha, two beta, and two gamma chains, forming a dimer of heterotrimers. Coenzyme F430 is required as a cofactor.

The protein localises to the cytoplasm. The enzyme catalyses coenzyme B + methyl-coenzyme M = methane + coenzyme M-coenzyme B heterodisulfide. The protein operates within one-carbon metabolism; methyl-coenzyme M reduction; methane from methyl-coenzyme M: step 1/1. Its function is as follows. Component of the methyl-coenzyme M reductase (MCR) I that catalyzes the reductive cleavage of methyl-coenzyme M (CoM-S-CH3 or 2-(methylthio)ethanesulfonate) using coenzyme B (CoB or 7-mercaptoheptanoylthreonine phosphate) as reductant which results in the production of methane and the mixed heterodisulfide of CoB and CoM (CoM-S-S-CoB). This is the final step in methanogenesis. The sequence is that of Methyl-coenzyme M reductase subunit beta (mcrB) from Methanosarcina barkeri (strain Fusaro / DSM 804).